The chain runs to 184 residues: Large ribosomal subunit protein bL17 (184 aa).

The segment at 126–184 is disordered; sequence TRAARAAASKQTADEAQVEETPAEEVTEETAAEETTEAAQADEAPAEEAPVEEKKDEEK. The span at 141–161 shows a compositional bias: acidic residues; it reads AQVEETPAEEVTEETAAEETT.

The protein belongs to the bacterial ribosomal protein bL17 family. As to quaternary structure, part of the 50S ribosomal subunit. Contacts protein L32.

The sequence is that of Large ribosomal subunit protein bL17 from Corynebacterium efficiens (strain DSM 44549 / YS-314 / AJ 12310 / JCM 11189 / NBRC 100395).